The primary structure comprises 761 residues: MDSGGGSLGLHTPDSRMAHTMIMQDFVAGMAGTAHIDGDHIVVSVPEAVLVSDVVTDDGITLDHGLAAEVVHGPDIITETDVVTEGVIVPEAVLEADVAIEEDLEEDDGDHILTSELITETVRVPEQVFVADLVTGPNGHLEHVVQDCVSGVDSPTMVSEEVLVTNSDTETVIQAAGGVPGSTVTIKTEDDDDDDVKSTSEDYLMISLDDVGEKLEHMGNTPLKIGSDGSQEDAKEDGFGSEVIKVYIFKAEAEDDVEIGGTEIVTESEYTSGHSVAGVLDQSRMQREKMVYMAVKDSSQEEDDIRDERRVSRRYEDCQASGNTLDSALESRSSTAAQYLQICDGINTNKVLKQKAKKRRRGETRQWQTAVIIGPDGQPLTVYPCHICTKKFKSRGFLKRHMKNHPDHLMRKKYQCTDCDFTTNKKVSFHNHLESHKLINKVDKTHEFTEYTRRYREASPLSSNKLILRDKEPKMHKCKYCDYETAEQGLLNRHLLAVHSKNFPHVCVECGKGFRHPSELKKHMRTHTGEKPYQCQYCIFRCADQSNLKTHIKSKHGNNLPYKCEHCPQAFGDERELQRHLDLFQGHKTHQCPHCDHKSTNSSDLKRHIISVHTKDFPHKCEVCDKGFHRPSELKKHSDIHKGRKIHQCRHCDFKTSDPFILSGHILSVHTKDQPLKCKRCKRGFRQQNELKKHMKTHTGRKIYQCEYCEYSTTDASGFKRHVISIHTKDYPHRCEFCKKGFRRPSEKNQHIMRHHKEALM.

Residues Lys224, Lys235, and Lys296 each participate in a glycyl lysine isopeptide (Lys-Gly) (interchain with G-Cter in SUMO2) cross-link. C2H2-type zinc fingers lie at residues 383 to 408 (YPCH…HPDH), 414 to 436 (YQCT…LESH), 476 to 499 (HKCK…LAVH), 505 to 527 (HVCV…MRTH), and 533 to 556 (YQCQ…KSKH). Positions 515-761 (RHPSELKKHM…IMRHHKEALM (247 aa)) are required for transcriptional activation. The C2H2-type 6; atypical zinc finger occupies 562–584 (YKCEHCPQAFGDERELQRHLDLF). Residues Cys564, Cys567, and His580 each contribute to the Zn(2+) site. 6 consecutive C2H2-type zinc fingers follow at residues 590–613 (HQCP…ISVH), 619–641 (HKCE…SDIH), 647–670 (HQCR…LSVH), 676–698 (LKCK…MKTH), 704–727 (YQCE…ISIH), and 733–755 (HRCE…IMRH).

This sequence belongs to the krueppel C2H2-type zinc-finger protein family. In terms of assembly, interacts with PHF8. As to expression, expressed in neural tissues.

The protein localises to the nucleus. In terms of biological role, transcription regulator required for brain development. Probably acts as a transcription factor that binds to the promoter of target genes and recruits PHF8 histone demethylase, leading to activated expression of genes involved in neuron development, such as KDM5C. May compete with transcription factor ARX for activation of expression of KDM5C. The protein is Zinc finger protein 711 (ZNF711) of Homo sapiens (Human).